Consider the following 292-residue polypeptide: E3 ubiquitin-protein ligase trim-21 (292 aa).

Residues 6–52 (CEICDDDFSSEEDGDHNPRNLKCSHTLCEGCIKKLLKNGRVVCPFCR) form an RING-type zinc finger. The segment at 90-137 (NFPPKCVEHPYNVAEFACIESNCSSKNKLMCQTCEEFGAHKGHAKELL) adopts a B box-type zinc-finger fold. 4 residues coordinate Zn(2+): cysteine 95, histidine 98, cysteine 123, and histidine 129. Residues 152-179 (INQLKLNIQNCTVKKNELEEAVVKSEQL) adopt a coiled-coil conformation.

This sequence belongs to the TRIM/RBCC family. Interacts with E2 ubiquitin-conjugating enzyme ubc-21. Interacts with ced-6; this mediates interaction of trim-21 with ced-1 and is required for ced-1 ubiquitination. Interacts with nck-1; the interaction is required for ced-1 ubiquitination. As to expression, in early larva, observed mainly in pharyngeal and body wall muscle cells.

The protein resides in the cytoplasm. The enzyme catalyses S-ubiquitinyl-[E2 ubiquitin-conjugating enzyme]-L-cysteine + [acceptor protein]-L-lysine = [E2 ubiquitin-conjugating enzyme]-L-cysteine + N(6)-ubiquitinyl-[acceptor protein]-L-lysine.. It participates in protein modification; protein ubiquitination. Functionally, E3 ubiquitin-protein ligase which catalyzes 'Lys-48'-linked polyubiquitination of ced-1, promoting its proteasomal degradation to maintain appropriate ced-1 levels for apoptotic cell clearance. Acts together with E2 ubiquitin-conjugating enzyme ubc-21. This Caenorhabditis elegans protein is E3 ubiquitin-protein ligase trim-21.